Reading from the N-terminus, the 308-residue chain is Putative mitochondrial transporter UCP3 (308 aa).

The Mitochondrial intermembrane segment spans residues 1 to 10; it reads MVGLQPSEVP. The helical transmembrane segment at 11 to 32 threads the bilayer; the sequence is PTTVVKFLGAGTAACFADLLTF. Solcar repeat units follow at residues 11 to 102, 111 to 202, and 211 to 296; these read PTTV…VKQF, SSVA…IKEK, and DNFP…LKRA. Over 33 to 73 the chain is Mitochondrial matrix; sequence PLDTAKVRLQIQGENPGVQSVQYRGVLGTILTMVRTEGPRS. Residues 74–96 form a helical membrane-spanning segment; sequence PYSGLVAGLHRQMSFASIRIGLY. Residues 97–116 lie on the Mitochondrial intermembrane side of the membrane; it reads DSVKQFYTPKGTDHSSVAIR. Residues 117–133 traverse the membrane as a helical segment; it reads ILAGCTTGAMAVTCAQP. Topologically, residues 134 to 179 are mitochondrial matrix; it reads TDVVKVRFQAMIRLGTGGERKYRGTMDAYRTIAREEGVRGLWKGTW. A helical transmembrane segment spans residues 180 to 196; it reads PNITRNAIVNCAEMVTY. Topologically, residues 197-213 are mitochondrial intermembrane; it reads DIIKEKLLDSHLFTDNF. A helical membrane pass occupies residues 214 to 233; sequence PCHFVSAFGAGFCATVVASP. Topologically, residues 234–267 are mitochondrial matrix; that stretch reads VDVVKTRYMNAPPGRYRSPLHCMLRMVAQEGPTA. A helical membrane pass occupies residues 268 to 290; the sequence is FYKGFMPSFLRLGSWNVMMFVTY. The tract at residues 275–297 is purine nucleotide binding; sequence SFLRLGSWNVMMFVTYEQLKRAL. Residues 291–308 lie on the Mitochondrial intermembrane side of the membrane; that stretch reads EQLKRALMKVQVLRESPF.

It belongs to the mitochondrial carrier (TC 2.A.29) family. As to quaternary structure, interacts with HAX1; the interaction is direct and calcium-dependent.

It localises to the mitochondrion inner membrane. Putative transmembrane transporter that plays a role in mitochondrial metabolism via an as yet unclear mechanism. Originally, this mitochondrial protein was thought to act as a proton transmembrane transporter from the mitochondrial intermembrane space into the matrix, causing proton leaks through the inner mitochondrial membrane, thereby uncoupling mitochondrial membrane potential generation from ATP synthesis. However, this function is controversial and uncoupling may not be the function, or at least not the main function, but rather a consequence of more conventional metabolite transporter activity. The sequence is that of Putative mitochondrial transporter UCP3 from Rattus norvegicus (Rat).